The sequence spans 511 residues: Vicilin-like seed storage protein At2g28490 (511 aa).

The signal sequence occupies residues 1–27; it reads MEKNKRAIGFLLLVVLINGVMMTRSNG. The segment at 54 to 81 is disordered; that stretch reads GGGGGGAWGGEGEGGGEWGGGGEGGGGG. 2 consecutive Cupin type-1 domains span residues 86–238 and 329–480; these read FMMR…PELQ and YNIY…ETMR. N-linked (GlcNAc...) asparagine glycans are attached at residues asparagine 231, asparagine 369, asparagine 403, and asparagine 464.

The protein belongs to the 7S seed storage protein family.

In terms of biological role, seed storage protein. In Arabidopsis thaliana (Mouse-ear cress), this protein is Vicilin-like seed storage protein At2g28490.